A 707-amino-acid chain; its full sequence is E3 ubiquitin-protein ligase Praja-2 (707 aa).

The segment covering 1-10 (MSQYTEKEPS) has biased composition (basic and acidic residues). 3 disordered regions span residues 1 to 23 (MSQY…AWPR), 75 to 120 (NTAG…PSVA), and 242 to 290 (AGDA…CVPG). S2 carries the N-acetylserine modification. Residues 109-119 (LNQSTESNPSV) are compositionally biased toward polar residues. The span at 246 to 276 (EAVHQDGQEFQRSSEDGIVRKRRQDDTDQGR) shows a compositional bias: basic and acidic residues. A phosphoserine mark is found at S306 and S320. Position 339 is a phosphoserine; by PKA (S339). 2 disordered regions span residues 380–403 (VTPR…GRQE) and 424–493 (EDSS…QTSL). Over residues 381-391 (TPREAERHRAT) the composition is skewed to basic and acidic residues. The residue at position 430 (S430) is a Phosphoserine. Acidic residues predominate over residues 465–481 (NEPELQSDSSGPEEENQ). A compositionally biased stretch (polar residues) spans 482-491 (ELSLQEGEQT). The segment at 530-707 (DGNNNLEDDS…PANDNAEEAP (178 aa)) is interaction with PRKAR1A, PRKAR2A and PRKAR2B. The segment at 549-569 (WSLFDGFADGLGVAEAISYVD) is mediates interaction with TBC1D31. An RING-type; atypical zinc finger spans residues 633–674 (CPICCSEYIKDDIATELPCHHFFHKPCVSIWLQKSGTCPVCR). The interval 686-707 (AAASSEPDLDASPANDNAEEAP) is disordered.

In terms of assembly, binds ubiquitin-conjugating enzymes (E2s). In vitro, interacts with the ubiquitin-conjugating enzyme, UBE2D2. The phosphorylated form interacts with PRKAR1A, PRKAR2A and PRKAR2B. Binds the catalytic subunits of cAMP-dependent protein kinase. Interacts with MFHAS1. Interacts with TBC1D31; the interaction is direct and recruits PJA2 to centrosomes. In terms of tissue distribution, highly expressed in the brain, in nerve cells but not in glial cells. Abundantly expressed in pyramidal neurons and in the CA3 region of apical dendrites. Colocalizes with PRKAR2B in dentate granule cells and at postsynaptic sites of primary hippocampal neurons.

The protein resides in the cytoplasm. It localises to the cell membrane. Its subcellular location is the endoplasmic reticulum membrane. The protein localises to the golgi apparatus membrane. It is found in the synapse. The protein resides in the postsynaptic density. It localises to the cytoskeleton. Its subcellular location is the microtubule organizing center. The protein localises to the centrosome. It catalyses the reaction S-ubiquitinyl-[E2 ubiquitin-conjugating enzyme]-L-cysteine + [acceptor protein]-L-lysine = [E2 ubiquitin-conjugating enzyme]-L-cysteine + N(6)-ubiquitinyl-[acceptor protein]-L-lysine.. It functions in the pathway protein modification; protein ubiquitination. Its function is as follows. Has E2-dependent E3 ubiquitin-protein ligase activity. Responsible for ubiquitination of cAMP-dependent protein kinase type I and type II-alpha/beta regulatory subunits and for targeting them for proteasomal degradation. Essential for PKA-mediated long-term memory processes. Through the ubiquitination of MFHAS1, positively regulates the TLR2 signaling pathway that leads to the activation of the downstream p38 and JNK MAP kinases and promotes the polarization of macrophages toward the pro-inflammatory M1 phenotype. Plays a role in ciliogenesis by ubiquitinating OFD1. The polypeptide is E3 ubiquitin-protein ligase Praja-2 (Pja2) (Rattus norvegicus (Rat)).